The following is a 435-amino-acid chain: Eukaryotic peptide chain release factor subunit 1-3 (435 aa).

Residue Ala2 is modified to N-acetylalanine.

Belongs to the eukaryotic release factor 1 family. As to quaternary structure, heterodimer of two subunits, one of which binds GTP.

Its subcellular location is the cytoplasm. Its function is as follows. Directs the termination of nascent peptide synthesis (translation) in response to the termination codons UAA, UAG and UGA. Modulates plant growth and development. This Arabidopsis thaliana (Mouse-ear cress) protein is Eukaryotic peptide chain release factor subunit 1-3 (ERF1-3).